The sequence spans 110 residues: Parvalbumin alpha (110 aa).

The residue at position 2 (S2) is an N-acetylserine. 2 positions are modified to phosphoserine: S2 and S24. 2 EF-hand domains span residues 39-74 (KSAD…FSPD) and 78-110 (LSAK…VAES). 11 residues coordinate Ca(2+): D52, D54, S56, F58, E60, E63, D91, D93, D95, K97, and E102.

The protein belongs to the parvalbumin family.

In terms of biological role, in muscle, parvalbumin is thought to be involved in relaxation after contraction. It binds two calcium ions. This is Parvalbumin alpha (PVALB) from Macaca fuscata fuscata (Japanese macaque).